A 199-amino-acid polypeptide reads, in one-letter code: Ion-translocating oxidoreductase complex subunit A (199 aa).

Helical transmembrane passes span 8 to 28 (LFTI…QFLG), 49 to 69 (VVFV…FILV), 75 to 95 (FLRT…VEFI), 106 to 126 (SLGI…AVLL), 138 to 158 (VVFG…MAAI), and 178 to 198 (AFFI…VIPL).

The protein belongs to the NqrDE/RnfAE family. In terms of assembly, the Rnf complex is probably composed of eight subunits, including RnfA, RnfB, RnfC, RnfD, RnfE and RnfG.

The protein resides in the cell membrane. In terms of biological role, part of a membrane-bound complex that couples electron transfer with translocation of ions across the membrane. Catalyzes Na(+) transport, most probably coupled to electron transfer from reduced ferredoxin to methanophenazine and heterodisulfide reductase. Involved in heterodisulfide reduction during methanogenesis from acetate. In Methanosarcina acetivorans (strain ATCC 35395 / DSM 2834 / JCM 12185 / C2A), this protein is Ion-translocating oxidoreductase complex subunit A.